The following is a 471-amino-acid chain: Argininosuccinate lyase (471 aa).

This sequence belongs to the lyase 1 family. Argininosuccinate lyase subfamily.

It localises to the cytoplasm. The enzyme catalyses 2-(N(omega)-L-arginino)succinate = fumarate + L-arginine. It functions in the pathway amino-acid biosynthesis; L-arginine biosynthesis; L-arginine from L-ornithine and carbamoyl phosphate: step 3/3. This Cereibacter sphaeroides (strain ATCC 17023 / DSM 158 / JCM 6121 / CCUG 31486 / LMG 2827 / NBRC 12203 / NCIMB 8253 / ATH 2.4.1.) (Rhodobacter sphaeroides) protein is Argininosuccinate lyase.